The primary structure comprises 118 residues: Small ribosomal subunit protein uS13 (118 aa).

The interval 94-118 is disordered; the sequence is GLPLRGQRTRTNARTRKGPRRPIRK.

Belongs to the universal ribosomal protein uS13 family. In terms of assembly, part of the 30S ribosomal subunit. Forms a loose heterodimer with protein S19. Forms two bridges to the 50S subunit in the 70S ribosome.

Functionally, located at the top of the head of the 30S subunit, it contacts several helices of the 16S rRNA. In the 70S ribosome it contacts the 23S rRNA (bridge B1a) and protein L5 of the 50S subunit (bridge B1b), connecting the 2 subunits; these bridges are implicated in subunit movement. Contacts the tRNAs in the A and P-sites. The protein is Small ribosomal subunit protein uS13 of Thioalkalivibrio sulfidiphilus (strain HL-EbGR7).